A 541-amino-acid chain; its full sequence is Propionate catabolism operon regulatory protein (541 aa).

The 244-residue stretch at 221–464 (IRGQSPQMEQ…RNMMERLALF (244 aa)) folds into the Sigma-54 factor interaction domain. 321–330 (AHGGTLFLDE) lines the ATP pocket. Positions 513-532 (KTAAARYLGISRTTLWRRLK) form a DNA-binding region, H-T-H motif.

Functionally, involved in the transcriptional regulation of the propionate catabolism operon. In Salmonella typhimurium (strain LT2 / SGSC1412 / ATCC 700720), this protein is Propionate catabolism operon regulatory protein (prpR).